We begin with the raw amino-acid sequence, 767 residues long: Bifunctional lysine-specific demethylase and histidyl-hydroxylase NO66 (767 aa).

A disordered region spans residues 21 to 324 (TVSQKQQREK…GRQEAHRQNS (304 aa)). Ser-44 bears the Phosphoserine mark. The span at 46 to 71 (SDDDDEDDGEGEDDNDSNSDEDESGS) shows a compositional bias: acidic residues. Low complexity predominate over residues 72-81 (ESDATSADDS). A compositionally biased stretch (acidic residues) spans 82-98 (FSSDDNDDDDSGDEDGS). Composition is skewed to polar residues over residues 127-137 (YTINSENSSVE) and 177-199 (ESATNGRIQQRKSMVEPATTSKP). At Ser-214 the chain carries Phosphoserine. Positions 262-279 (PSSSGASCPLPSKTSKQV) are enriched in polar residues. A compositionally biased stretch (basic and acidic residues) spans 315–324 (GRQEAHRQNS). The JmjC domain occupies 420–565 (CSIRILNPST…NLLEKLMPMV (146 aa)). Fe cation contacts are provided by His-466, Asp-468, and His-531.

It belongs to the ROX family. NO66 subfamily. Fe(2+) serves as cofactor.

It localises to the nucleus. The catalysed reaction is N(6),N(6)-dimethyl-L-lysyl(36)-[histone H3] + 2 2-oxoglutarate + 2 O2 = L-lysyl(36)-[histone H3] + 2 formaldehyde + 2 succinate + 2 CO2. In terms of biological role, oxygenase that can act as both a histone lysine demethylase and a ribosomal histidine hydroxylase. Specifically demethylates 'Lys-4' (H3K4me) and 'Lys-36' (H3K36me) of histone H3, thereby playing a central role in histone code. The sequence is that of Bifunctional lysine-specific demethylase and histidyl-hydroxylase NO66 from Drosophila willistoni (Fruit fly).